A 419-amino-acid chain; its full sequence is Serine hydroxymethyltransferase (419 aa).

Residues Leu-120 and 124–126 (GHL) contribute to the (6S)-5,6,7,8-tetrahydrofolate site. The residue at position 229 (Lys-229) is an N6-(pyridoxal phosphate)lysine.

Belongs to the SHMT family. Homodimer. Pyridoxal 5'-phosphate serves as cofactor.

The protein localises to the cytoplasm. The enzyme catalyses (6R)-5,10-methylene-5,6,7,8-tetrahydrofolate + glycine + H2O = (6S)-5,6,7,8-tetrahydrofolate + L-serine. It functions in the pathway one-carbon metabolism; tetrahydrofolate interconversion. Its pathway is amino-acid biosynthesis; glycine biosynthesis; glycine from L-serine: step 1/1. Its function is as follows. Catalyzes the reversible interconversion of serine and glycine with tetrahydrofolate (THF) serving as the one-carbon carrier. This reaction serves as the major source of one-carbon groups required for the biosynthesis of purines, thymidylate, methionine, and other important biomolecules. Also exhibits THF-independent aldolase activity toward beta-hydroxyamino acids, producing glycine and aldehydes, via a retro-aldol mechanism. The sequence is that of Serine hydroxymethyltransferase from Herpetosiphon aurantiacus (strain ATCC 23779 / DSM 785 / 114-95).